Reading from the N-terminus, the 119-residue chain is Large ribosomal subunit protein bL20 (119 aa).

It belongs to the bacterial ribosomal protein bL20 family.

Functionally, binds directly to 23S ribosomal RNA and is necessary for the in vitro assembly process of the 50S ribosomal subunit. It is not involved in the protein synthesizing functions of that subunit. In Alkalilimnicola ehrlichii (strain ATCC BAA-1101 / DSM 17681 / MLHE-1), this protein is Large ribosomal subunit protein bL20.